The following is a 179-amino-acid chain: Dynein light chain Tctex-type 5 (179 aa).

This sequence belongs to the dynein light chain Tctex-type family. As to quaternary structure, interacts with ZMYND10.

In Homo sapiens (Human), this protein is Dynein light chain Tctex-type 5 (DYNLT5).